A 368-amino-acid polypeptide reads, in one-letter code: HECT-type ubiquitin ligase-interacting protein apyA (368 aa).

It belongs to the arrestin family. As to quaternary structure, interacts with hulA.

In terms of biological role, may be involved in signaling by recognizing appropriately phosphorylated substrates via its arrestin domains and then recruit a HECT-type ubiquitin ligase such as hulA, leading to ubiquitination of the substrate, providing a link between ubiquitination and phosphorylation in protein regulation and stability. The chain is HECT-type ubiquitin ligase-interacting protein apyA (apyA) from Emericella nidulans (strain FGSC A4 / ATCC 38163 / CBS 112.46 / NRRL 194 / M139) (Aspergillus nidulans).